A 173-amino-acid polypeptide reads, in one-letter code: Archaemetzincin (173 aa).

Zn(2+) is bound at residue H130. The Proton acceptor role is filled by E131. Positions 134, 140, 141, 146, 165, and 168 each coordinate Zn(2+).

Belongs to the peptidase M54 family. As to quaternary structure, monomer. Zn(2+) is required as a cofactor.

Its function is as follows. Probable zinc metalloprotease whose natural substrate is unknown. The sequence is that of Archaemetzincin from Halobacterium salinarum (strain ATCC 29341 / DSM 671 / R1).